The primary structure comprises 615 residues: Dehydrogenase str4 (615 aa).

Residues 45–46 (TA), 66–67 (EA), and 123–126 (NGSM) each bind FAD. Catalysis depends on H552, which acts as the Proton acceptor. FAD is bound by residues A585 and 596–597 (PA).

This sequence belongs to the GMC oxidoreductase family. As to quaternary structure, homodimer. The cofactor is FAD.

Its pathway is mycotoxin biosynthesis. Dehydrogenase; part of the gene cluster that mediates the biosynthesis of strobilurin A, an antifungal polyketide that contains a key beta-methoxyacrylate toxophore that targets the complex III of the mitochondrial electron transport chain. Strobilurin biosynthesis begins with construction of benzoyl CoA by step-wise elimination of ammonia from phenylalanine by the phenylalanine ammonia-lyase str11, oxygenation by str8 and retro-Claisen reaction to form benzoic acid, which is activated to its CoA thiolester benzoyl CoA by the dedicated CoA ligase str10. Benzoyl CoA forms the starter unit for the highly reducing polyketide synthase stpks1 that produces the polyketide prestrobilutin A. The FAD-dependent oxygenase str9 then catalyzes the key oxidative rearrangement responsible for the creation of the beta-methoxyacrylate toxophore. Str9 performs epoxidation of the 2,3 olefin of prestrobilutin A, followed by Meinwald rearrangement to furnish the aldehyde intermediate. Rapid enolization of the aldehyde intermediate would give the beta-methoxyacrylate skeleton and methylations catalyzed by str2 and str3 complete the synthesis and lead to the production of strobilurin A. The short-chain dehydrogenase stl2 and the dehydrogenase str4 play a role in the shunt pathway leading to the production of bolineol. The cluster encodes no obvious halogenase gene that could be involved in production of strobilurin B, nor any obvious dimethylallyl-transferase that could be involved in the production of strobilurin G. It is possible that unknown proteins encoded in, or near, the cluster (such as str1 or stl1) may form new classes of halogenases or dimethylally-transferases, or that the responsible genes are located elsewhere on the genome. Similarly, proteins encoded by str5/str6 hydrolases appear to have no chemical role in the biosynthesis of strobilurin A. Finally, no obvious self-resistance gene is found within the cluster. In Strobilurus tenacellus, this protein is Dehydrogenase str4.